The following is a 1295-amino-acid chain: MMEILRGSPALSAFRINKLLARFQAANLQVHNIYAEYVHFADLNAPLNDSEQAQLTRLLQYGPALNSHTPAGKLLLVTPRPGTISPWSSKATDIAHNCGLQQVDRLERGVAYYIEASTLTAEQWRQVAAELHDRMMETVFSSLTDAEKLFIHHQPAPVSSVDLLGEGRQALIDANLRLGLALAEDEIDYLQEAFTKLGRNPNDIELYMFAQANSEHCRHKIFNADWIIDGKPQPKSLFKMIKNTFETTPDYVLSAYKDNAAVMEGSAVGRYFADHNTGRYDFHQEPAHILMKVETHNHPTAISPWPGAATGSGGEIRDEGATGRGAKPKAGLVGFSVSNLRIPGFEQPWEEDFGKPERIVTALDIMTEGPLGGAAFNNEFGRPALTGYFRTYEDKVNSHNGEELRGYHKPIMLAGGIGNIRADHVQKGEIVVGAKLIVLGGPAMNIGLGGGAASSMASGQSDVDLDFASVQRDNPEMERRCQEVIDRCWQLGDANPILFIHDVGAGGLSNAMPELVSDGGRGGKFELRDILSDEPGMSPLEIWCNESQERYVLAVAADQLPLFDELCKRERAPYAVIGDATEEQHLSLHDNHFDNQPIDLPLDVLLGKTPKMTRDVQTLKAKGDALNRADITIADAVNRVLHLPTVAEKTFLVTIGDRTVTGMVARDQMVGPWQVPVADCAVTTASLDSYYGEAMSIGERAPVALLDFAASARLAVGEALTNIAATQIGDIKRIKLSANWMAAAGHPGEDAGLYDAVKAVGEELCPQLGLTIPVGKDSMSMKTRWQEGNEQREMTSPLSLVISAFARVEDVRHTLTPQLSTEDNALLLIDLGKGHNALGATALAQVYRQLGDKPADVRDVAQLKGFYDAMQALVAARKLLAWHDRSDGGLLVTLAEMAFAGHCGVQVDIAALGDDHLAALFNEELGGVIQVRAEDREAVEALLAQYGLADCVHYLGQALAGDRFVITANDQTVFSESRTTLRVWWAETTWQMQRLRDNPQCADQEHEAKANDADPGLNVKLSFDINEDIAAPYIATGARPKVAVLREQGVNSHVEMAAAFHRAGFDAIDVHMSDLLGGRIGLGNFHALVACGGFSYGDVLGAGEGWAKSILFNPRVRDEFETFFHRPQTLALGVCNGCQMMSNLRELIPGSELWPRFVRNHSDRFEARFSLVEVTQSPSLLLQGMVGSQMPIAVSHGEGRVEVRDDAHLAALESKGLVALRYVDNFGKVTETYPANPNGSPNGITAVTTENGRVTIMMPHPERVFRTVANSWHPENWGEDSPWMRIFRNARKQLG.

A disordered region spans residues 305-327; the sequence is WPGAATGSGGEIRDEGATGRGAK. ATP-binding positions include 307-318, 386-388, and Ala678; these read GAATGSGGEIRD and TGY. Asp679, Glu718, Asn722, and Asp884 together coordinate Mg(2+). Ser886 provides a ligand contact to ATP. Residues 1042 to 1295 form the Glutamine amidotransferase type-1 domain; it reads VAVLREQGVN…IFRNARKQLG (254 aa). Cys1135 functions as the Nucleophile in the catalytic mechanism. Active-site residues include His1260 and Glu1262.

This sequence in the N-terminal section; belongs to the FGAMS family. As to quaternary structure, monomer.

It localises to the cytoplasm. The catalysed reaction is N(2)-formyl-N(1)-(5-phospho-beta-D-ribosyl)glycinamide + L-glutamine + ATP + H2O = 2-formamido-N(1)-(5-O-phospho-beta-D-ribosyl)acetamidine + L-glutamate + ADP + phosphate + H(+). It functions in the pathway purine metabolism; IMP biosynthesis via de novo pathway; 5-amino-1-(5-phospho-D-ribosyl)imidazole from N(2)-formyl-N(1)-(5-phospho-D-ribosyl)glycinamide: step 1/2. Its function is as follows. Phosphoribosylformylglycinamidine synthase involved in the purines biosynthetic pathway. Catalyzes the ATP-dependent conversion of formylglycinamide ribonucleotide (FGAR) and glutamine to yield formylglycinamidine ribonucleotide (FGAM) and glutamate. The chain is Phosphoribosylformylglycinamidine synthase from Salmonella paratyphi A (strain ATCC 9150 / SARB42).